Reading from the N-terminus, the 90-residue chain is Small ribosomal subunit protein uS15c (90 aa).

The protein belongs to the universal ribosomal protein uS15 family. In terms of assembly, part of the 30S ribosomal subunit.

The protein localises to the plastid. It localises to the chloroplast. This is Small ribosomal subunit protein uS15c (rps15-A) from Ipomoea purpurea (Common morning glory).